Here is a 1507-residue protein sequence, read N- to C-terminus: ABC multidrug transporter SNQ2 (1507 aa).

The tract at residues 1 to 73 is disordered; that stretch reads MSSSSEISVA…RSSTAELSPE (73 aa). Basic and acidic residues predominate over residues 41-55; sequence RSHEDADGDDAHSDN. 2 N-linked (GlcNAc...) asparagine glycosylation sites follow: Asn55 and Asn336. The region spanning 157 to 412 is the ABC transporter 1 domain; it reads CLPYTIYKAI…FYRMGYECPP (256 aa). 3 helical membrane passes run 522 to 542, 556 to 576, and 605 to 625; these read AYTV…GSLY, GGVL…NLSF, and FPFR…LSGL. Residue Asn626 is glycosylated (N-linked (GlcNAc...) asparagine). The chain crosses the membrane as a helical span at residues 635-655; that stretch reads VYLFLTMCSESINALFELIAA. An N-linked (GlcNAc...) asparagine glycan is attached at Asn659. Transmembrane regions (helical) follow at residues 665-685 and 773-793; these read SISG…IQLP and FGIM…ITEI. Residues 857-1099 form the ABC transporter 2 domain; that stretch reads FIWRNVCYTI…LLSYFERNGA (243 aa). N-linked (GlcNAc...) asparagine glycosylation occurs at Asn878. ATP is bound at residue 893–900; the sequence is GESGAGKT. 3 consecutive transmembrane segments (helical) span residues 1193-1213, 1220-1240, and 1270-1290; these read YIMS…FTFY, TGLQ…APAM, and LITQ…IFFV. A glycan (N-linked (GlcNAc...) asparagine) is linked at Asn1311. Helical transmembrane passes span 1314–1334 and 1339–1359; these read IMFQ…APNL and VILG…QPVS. N-linked (GlcNAc...) asparagine glycosylation is present at Asn1428. The chain crosses the membrane as a helical span at residues 1459 to 1479; the sequence is FGLYWAYIGFNICAMVAIYYI.

Belongs to the ABC transporter superfamily. ABCG family. PDR (TC 3.A.1.205) subfamily.

Its subcellular location is the cell membrane. Its function is as follows. ABC multidrug transporter involved in the response to azoles such as fluconazole, itraconazole, ketoconazole and voriconazole and contributes to the development of PDR1-dependent azole resistance. Plays a role in biofilm tolerance to fluconazole. Also confers resistance to 4-nitroquinoline-N-oxide (4-NQO). The polypeptide is ABC multidrug transporter SNQ2 (Candida glabrata (strain ATCC 2001 / BCRC 20586 / JCM 3761 / NBRC 0622 / NRRL Y-65 / CBS 138) (Yeast)).